The following is a 294-amino-acid chain: Methionine aminopeptidase (294 aa).

A substrate-binding site is contributed by H65. D85, D96, and H156 together coordinate a divalent metal cation. Position 164 (H164) interacts with substrate. Residues E189 and E279 each contribute to the a divalent metal cation site.

It belongs to the peptidase M24A family. Methionine aminopeptidase archaeal type 2 subfamily. In terms of assembly, monomer. Co(2+) is required as a cofactor. It depends on Zn(2+) as a cofactor. Mn(2+) serves as cofactor. Requires Fe(2+) as cofactor.

The catalysed reaction is Release of N-terminal amino acids, preferentially methionine, from peptides and arylamides.. In terms of biological role, removes the N-terminal methionine from nascent proteins. The N-terminal methionine is often cleaved when the second residue in the primary sequence is small and uncharged (Met-Ala-, Cys, Gly, Pro, Ser, Thr, or Val). This Methanocaldococcus jannaschii (strain ATCC 43067 / DSM 2661 / JAL-1 / JCM 10045 / NBRC 100440) (Methanococcus jannaschii) protein is Methionine aminopeptidase.